A 175-amino-acid polypeptide reads, in one-letter code: GTP-dependent dephospho-CoA kinase (175 aa).

Residues aspartate 48, valine 49, valine 50, aspartate 66, and glutamate 124 each coordinate GTP.

This sequence belongs to the GTP-dependent DPCK family.

The catalysed reaction is 3'-dephospho-CoA + GTP = GDP + CoA + H(+). The protein operates within cofactor biosynthesis; coenzyme A biosynthesis. Its function is as follows. Catalyzes the GTP-dependent phosphorylation of the 3'-hydroxyl group of dephosphocoenzyme A to form coenzyme A (CoA). The chain is GTP-dependent dephospho-CoA kinase from Thermofilum pendens (strain DSM 2475 / Hrk 5).